The following is a 129-amino-acid chain: Glycine cleavage system H protein (129 aa).

Residues 24–106 (VFTVGISEHA…YGDGWLFKIK (83 aa)) enclose the Lipoyl-binding domain. Lys65 bears the N6-lipoyllysine mark.

The protein belongs to the GcvH family. The glycine cleavage system is composed of four proteins: P, T, L and H. (R)-lipoate serves as cofactor.

In terms of biological role, the glycine cleavage system catalyzes the degradation of glycine. The H protein shuttles the methylamine group of glycine from the P protein to the T protein. The protein is Glycine cleavage system H protein of Alteromonas mediterranea (strain DSM 17117 / CIP 110805 / LMG 28347 / Deep ecotype).